A 422-amino-acid polypeptide reads, in one-letter code: MNGKQQVTKKPSTEEDLSFTKFKVVPDVGLKSSQFEFVLGMPINQCIAMIQQHPRMLTKVELKYSKKDPFYQDIIIYIGSTGIRLYFDGLSQLIKLIEVDNLSMITLTYNDTIFSDPNNMATLDRVNEFFGSTHPGSYDDKHNIYVQSWPGLSFCFPYGGENSNLEVRPGFGGNLRSLKYDANSQPKLTKMSIYRGPNPSEPESVDTPFSCYCGQNRTRKVEAIWENGNIVGIDIQFDTQNGRIVDGEYDVSTYTRQIYFGDSVSDVQSILGAPTKVFYKSDDKMKIHRGLHKETLYGPPNFFFNYFVMGLDILFDFVSKRVVKFVLHTNAPGHCDFGMYSRCNFSIFLNDKQYEIRTDSKFDEFSHAFMNDSNPPRPVVLARQEQQPFGSTFCYGIKQIIVERTENGFLTSVTIYDGAKEK.

It belongs to the PHAF1 family.

It localises to the cytoplasm. It is found in the preautophagosomal structure. In terms of biological role, may play a regulatory role in autophagic activity. The protein is PHAF1 protein T01G9.2 of Caenorhabditis elegans.